The chain runs to 218 residues: Small ribosomal subunit protein uS3c (218 aa).

Residues V47–E118 form the KH type-2 domain.

Belongs to the universal ribosomal protein uS3 family. Part of the 30S ribosomal subunit.

It is found in the plastid. Its subcellular location is the chloroplast. This is Small ribosomal subunit protein uS3c (rps3) from Anthoceros angustus (Hornwort).